An 80-amino-acid polypeptide reads, in one-letter code: Caltrin (80 aa).

An N-terminal signal peptide occupies residues Met1–Pro32.

Inhibits calcium transport into spermatozoa; it does not bind directly to calcium. Binds to calmodulin. Inhibits the growth of microorganisms. Seem to act as an antibiotic by permeabilizing the bacterial membrane. The polypeptide is Caltrin (PYY2) (Bos taurus (Bovine)).